Reading from the N-terminus, the 232-residue chain is 7-cyano-7-deazaguanine synthase (232 aa).

ATP is bound at residue 8 to 18 (FSGGQDSTTCL). Positions 187, 196, 199, and 202 each coordinate Zn(2+).

The protein belongs to the QueC family. Zn(2+) is required as a cofactor.

The catalysed reaction is 7-carboxy-7-deazaguanine + NH4(+) + ATP = 7-cyano-7-deazaguanine + ADP + phosphate + H2O + H(+). Its pathway is purine metabolism; 7-cyano-7-deazaguanine biosynthesis. In terms of biological role, catalyzes the ATP-dependent conversion of 7-carboxy-7-deazaguanine (CDG) to 7-cyano-7-deazaguanine (preQ(0)). This is 7-cyano-7-deazaguanine synthase from Photobacterium profundum (strain SS9).